A 738-amino-acid chain; its full sequence is Protein Aster-B (738 aa).

The tract at residues 1–81 is disordered; it reads MKGFKLSCTA…SGGKNSKKSQ (81 aa). Residues 8-19 show a composition bias toward polar residues; that stretch reads CTASNSNRSTPA. 2 positions are modified to phosphoserine: Ser28 and Ser30. The span at 41–51 shows a compositional bias: basic and acidic residues; that stretch reads MVEKGSDHSSD. Residues 59 to 70 show a composition bias toward low complexity; sequence QGVQRSCSSQSG. Residues 96–163 form the GRAM domain; it reads EDFRKLFKQL…KDICSMTKEK (68 aa). The interval 254 to 299 is disordered; sequence EENEVNDSSSKSSIETKPDASPQLPKKSITNSTLTSTGSSEAPVSF. Positions 259 to 268 are enriched in polar residues; the sequence is NDSSSKSSIE. Residue Ser274 is modified to Phosphoserine. Over residues 281–295 the composition is skewed to polar residues; the sequence is SITNSTLTSTGSSEA. The 172-residue stretch at 372 to 543 folds into the VASt domain; it reads SGRQYVNEVF…ELTKTESTYL (172 aa). Tyr389 is subject to Phosphotyrosine. Residues Ser550 and Ser581 each carry the phosphoserine modification. Thr584, Thr585, and Thr587 each carry phosphothreonine. The chain crosses the membrane as a helical span at residues 623 to 643; the sequence is LLLVISCVICFSLVLLVVLNM.

As to expression, highly expressed in the adrenal gland (at protein level) and brain. Also found in the kidney, testis and macrophages.

Its subcellular location is the endoplasmic reticulum membrane. The protein localises to the cell membrane. Cholesterol transporter that mediates non-vesicular transport of cholesterol from the plasma membrane (PM) to the endoplasmic reticulum (ER). Contains unique domains for binding cholesterol and the PM, thereby serving as a molecular bridge for the transfer of cholesterol from the PM to the ER. Plays a crucial role in cholesterol homeostasis in the adrenal gland and has the unique ability to localize to the PM based on the level of membrane cholesterol. In lipid-poor conditions localizes to the ER membrane and in response to excess cholesterol in the PM is recruited to the endoplasmic reticulum-plasma membrane contact sites (EPCS) which is mediated by the GRAM domain. At the EPCS, the sterol-binding VASt/ASTER domain binds to the cholesterol in the PM and facilitates its transfer from the PM to ER. This is Protein Aster-B (Gramd1b) from Mus musculus (Mouse).